Reading from the N-terminus, the 147-residue chain is Ribosome maturation factor RimP (147 aa).

Belongs to the RimP family.

It localises to the cytoplasm. Its function is as follows. Required for maturation of 30S ribosomal subunits. The sequence is that of Ribosome maturation factor RimP from Sulfurihydrogenibium sp. (strain YO3AOP1).